Here is a 252-residue protein sequence, read N- to C-terminus: Phosphate import ATP-binding protein PstB (252 aa).

The region spanning I6–I247 is the ABC transporter domain. An ATP-binding site is contributed by G38–S45.

It belongs to the ABC transporter superfamily. Phosphate importer (TC 3.A.1.7) family. As to quaternary structure, the complex is composed of two ATP-binding proteins (PstB), two transmembrane proteins (PstC and PstA) and a solute-binding protein (PstS).

The protein localises to the cell inner membrane. It carries out the reaction phosphate(out) + ATP + H2O = ADP + 2 phosphate(in) + H(+). Functionally, part of the ABC transporter complex PstSACB involved in phosphate import. Responsible for energy coupling to the transport system. The chain is Phosphate import ATP-binding protein PstB from Bacteroides thetaiotaomicron (strain ATCC 29148 / DSM 2079 / JCM 5827 / CCUG 10774 / NCTC 10582 / VPI-5482 / E50).